A 393-amino-acid polypeptide reads, in one-letter code: NAD(P)H-quinone oxidoreductase subunit H, chloroplastic (393 aa).

The protein belongs to the complex I 49 kDa subunit family. In terms of assembly, NDH is composed of at least 16 different subunits, 5 of which are encoded in the nucleus.

The protein resides in the plastid. The protein localises to the chloroplast thylakoid membrane. The catalysed reaction is a plastoquinone + NADH + (n+1) H(+)(in) = a plastoquinol + NAD(+) + n H(+)(out). It catalyses the reaction a plastoquinone + NADPH + (n+1) H(+)(in) = a plastoquinol + NADP(+) + n H(+)(out). In terms of biological role, NDH shuttles electrons from NAD(P)H:plastoquinone, via FMN and iron-sulfur (Fe-S) centers, to quinones in the photosynthetic chain and possibly in a chloroplast respiratory chain. The immediate electron acceptor for the enzyme in this species is believed to be plastoquinone. Couples the redox reaction to proton translocation, and thus conserves the redox energy in a proton gradient. This Cryptomeria japonica (Japanese cedar) protein is NAD(P)H-quinone oxidoreductase subunit H, chloroplastic.